Reading from the N-terminus, the 209-residue chain is MSRTIVVKNPRTSGKDEDKAQIPSQDELPSGSSGAKTTNQIISEFRALIKDPIKLDEAVNYLYETLVDDAAVGIFIETRQLQKTGSLTALEGTVEETNDMCDLPDCDIFGMSTAEKTAKCCCPNCERMVAAVRFAPHLQTCLGLGRSSSRAALRRLTVSSRSSSTSTGGGQANEKSTDDEDWSLDSRPGKSTKNSRNKGSKKNQKNKLK.

The interval 1-36 (MSRTIVVKNPRTSGKDEDKAQIPSQDELPSGSSGAK) is disordered. The SGF11-type zinc finger occupies 120–141 (CCCPNCERMVAAVRFAPHLQTC). Positions 156 to 166 (LTVSSRSSSTS) are enriched in low complexity. The tract at residues 156 to 209 (LTVSSRSSSTSTGGGQANEKSTDDEDWSLDSRPGKSTKNSRNKGSKKNQKNKLK) is disordered. Residues 193–209 (KNSRNKGSKKNQKNKLK) show a composition bias toward basic residues.

It belongs to the SGF11 family. As to quaternary structure, component of some SAGA transcription coactivator-HAT complexes, at least composed of Ada2b, not/nonstop, Pcaf/Gcn5, Sgf11 and Spt3. Within the SAGA complex, Sgf11, e(y)2, and not/nonstop form an additional subcomplex of SAGA called the DUB module (deubiquitination module). Interacts directly with not/nonstop. Interacts with the AMEX complex component xmas-2. Interacts with Cbp80; important for promoter recruitment of Sgf11 that is not associated with the DUB module.

The protein localises to the nucleus. It is found in the nucleoplasm. The protein resides in the cytoplasm. Functionally, component of the transcription regulatory histone acetylation (HAT) complex SAGA, a multiprotein complex that activates transcription by remodeling chromatin and mediating histone acetylation and deubiquitination. Within the SAGA complex, participates in a subcomplex that specifically deubiquitinates histone H2B. The SAGA complex is recruited to specific gene promoters by activators, where it is required for transcription. Required for nuclear receptor-mediated transactivation. Binds independently on SAGA to promoters in an RNA-dependent manner. Binds to mRNA and is essential for total mRNA export from the nucleus. Required to counteract heterochromatin silencing. Controls the development of neuronal connectivity in visual system by being required for accurate axon targeting in the optic lobe. Required for expression of ecdysone-induced genes such as br/broad. The chain is SAGA-associated factor 11 homolog 1 from Drosophila willistoni (Fruit fly).